We begin with the raw amino-acid sequence, 262 residues long: Acyl-coenzyme A diphosphatase FITM2 (262 aa).

Topologically, residues 1–23 are cytoplasmic; the sequence is MEHLERCAWVLRGTLVRSAVRKY. Residues 24-44 traverse the membrane as a helical segment; that stretch reads LPWALAASMLAGSLLKELSPL. Residues 45–57 are Lumenal-facing; sequence PESYLSNKRNVLN. A helical membrane pass occupies residues 58 to 78; sequence VYFVKVAWAWTFCLLLPFIAL. Topologically, residues 79-93 are cytoplasmic; sequence TNYHLTGKAGLVLRR. A helical membrane pass occupies residues 94–114; it reads LSTLLVGTAIWYVCTAIFSNI. Residues 115 to 145 lie on the Lumenal side of the membrane; it reads EHYTGSCYQSPALEGERKEHQSKQQCHGEGG. A helical transmembrane segment spans residues 146–166; that stretch reads FWHGFDISGHSFLLTFCALMI. The active site involves histidine 155. At 167 to 190 the chain is on the cytoplasmic side; sequence VEEMAVLHEVKTDRNHCLHAAITT. Residues 191–211 traverse the membrane as a helical segment; sequence LVVALGFLTFIWVWMFLCTAV. The Lumenal segment spans residues 212–218; sequence YFHNLSQ. Residue histidine 214 is part of the active site. Residues 219–239 traverse the membrane as a helical segment; sequence KVFGTLFGLLGWYGTYGCWYL. Residues 240–262 lie on the Cytoplasmic side of the membrane; sequence KSFSPGLPPQSSSLNLKQDTYKK.

This sequence belongs to the FIT family. FIT2 subfamily.

It localises to the endoplasmic reticulum membrane. It carries out the reaction an acyl-CoA + H2O = an acyl-4'-phosphopantetheine + adenosine 3',5'-bisphosphate + 2 H(+). The catalysed reaction is (9Z)-octadecenoyl-CoA + H2O = S-(9Z-octadecenoyl)-4'-phosphopantetheine + adenosine 3',5'-bisphosphate + 2 H(+). The enzyme catalyses (5Z,8Z,11Z,14Z)-eicosatetraenoyl-CoA + H2O = S-(5Z,8Z,11Z,14Z-eicosatetraenoyl)-4'-phosphopantetheine + adenosine 3',5'-bisphosphate + 2 H(+). It catalyses the reaction hexadecanoyl-CoA + H2O = S-hexadecanoyl-4'-phosphopantetheine + adenosine 3',5'-bisphosphate + 2 H(+). Fatty acyl-coenzyme A (CoA) diphosphatase that hydrolyzes fatty acyl-CoA to yield acyl-4'-phosphopantetheine and adenosine 3',5'-bisphosphate. Preferentially hydrolyzes unsaturated long-chain acyl-CoA substrates such as oleoyl-CoA/(9Z)-octadecenoyl-CoA and arachidonoyl-CoA/(5Z,8Z,11Z,14Z)-eicosatetraenoyl-CoA in the endoplasmic reticulum (ER) lumen. This catalytic activity is required for maintaining ER structure and for lipid droplets (LDs) biogenesis, which are lipid storage organelles involved in maintaining lipid and energy homeostasis. Directly binds to diacylglycerol (DAGs) and triacylglycerol, which is also important for LD biogenesis. May support directional budding of nacent LDs from the ER into the cytosol by reducing DAG levels at sites of LD formation. Plays a role in the regulation of cell morphology and cytoskeletal organization. This chain is Acyl-coenzyme A diphosphatase FITM2, found in Bos taurus (Bovine).